We begin with the raw amino-acid sequence, 467 residues long: UPF0236 protein TTE0610/TTE0881/TTE1053/TTE2432 (467 aa).

The protein belongs to the UPF0236 family.

The sequence is that of UPF0236 protein TTE0610/TTE0881/TTE1053/TTE2432 from Caldanaerobacter subterraneus subsp. tengcongensis (strain DSM 15242 / JCM 11007 / NBRC 100824 / MB4) (Thermoanaerobacter tengcongensis).